The chain runs to 420 residues: Glutamyl-tRNA reductase (420 aa).

Substrate-binding positions include 49–52 (TCNR), serine 109, 114–116 (EPQ), and glutamine 120. Residue cysteine 50 is the Nucleophile of the active site. 189 to 194 (GAGETI) contacts NADP(+).

Belongs to the glutamyl-tRNA reductase family. Homodimer.

The catalysed reaction is (S)-4-amino-5-oxopentanoate + tRNA(Glu) + NADP(+) = L-glutamyl-tRNA(Glu) + NADPH + H(+). It functions in the pathway porphyrin-containing compound metabolism; protoporphyrin-IX biosynthesis; 5-aminolevulinate from L-glutamyl-tRNA(Glu): step 1/2. Its function is as follows. Catalyzes the NADPH-dependent reduction of glutamyl-tRNA(Glu) to glutamate 1-semialdehyde (GSA). The protein is Glutamyl-tRNA reductase of Edwardsiella ictaluri (strain 93-146).